Reading from the N-terminus, the 142-residue chain is Hemoglobin subunit alpha (142 aa).

The region spanning 2–142 (VLSAADKSNV…VGTVLTSKYR (141 aa)) is the Globin domain. A Phosphoserine modification is found at S4. N6-succinyllysine is present on residues K8 and K12. Position 17 is an N6-acetyllysine; alternate (K17). At K17 the chain carries N6-succinyllysine; alternate. Phosphotyrosine is present on Y25. S36 carries the post-translational modification Phosphoserine. At K41 the chain carries N6-succinyllysine. S50 bears the Phosphoserine mark. H59 is an O2 binding site. Residue H88 coordinates heme b. S103 is subject to Phosphoserine. At T109 the chain carries Phosphothreonine. A phosphoserine mark is found at S125 and S132. Residues T135 and T138 each carry the phosphothreonine modification. The residue at position 139 (S139) is a Phosphoserine.

This sequence belongs to the globin family. In terms of assembly, heterotetramer of two alpha chains and two beta chains. In terms of tissue distribution, red blood cells.

Involved in oxygen transport from the lung to the various peripheral tissues. Its function is as follows. Hemopressin acts as an antagonist peptide of the cannabinoid receptor CNR1. Hemopressin-binding efficiently blocks cannabinoid receptor CNR1 and subsequent signaling. This Pantholops hodgsonii (Chiru) protein is Hemoglobin subunit alpha (HBA).